Here is a 209-residue protein sequence, read N- to C-terminus: NAD(P)H dehydrogenase (quinone) (209 aa).

Residues 4–199 (VNIIFHSVHA…EMARYQGRHV (196 aa)) form the Flavodoxin-like domain. FMN is bound by residues 10 to 15 (SVHAHI) and 87 to 89 (TRY). Substrate is bound at residue Trp107. Residues 122-128 (SSGTQHG) and His143 contribute to the FMN site.

The protein belongs to the WrbA family. The cofactor is FMN.

It carries out the reaction a quinone + NADH + H(+) = a quinol + NAD(+). The enzyme catalyses a quinone + NADPH + H(+) = a quinol + NADP(+). The chain is NAD(P)H dehydrogenase (quinone) from Methanosarcina mazei (strain ATCC BAA-159 / DSM 3647 / Goe1 / Go1 / JCM 11833 / OCM 88) (Methanosarcina frisia).